The primary structure comprises 227 residues: Lipoprotein-releasing system ATP-binding protein LolD (227 aa).

Positions 6-227 constitute an ABC transporter domain; that stretch reads LVLDDIQKSY…RLDEGVLVSA (222 aa). 43 to 50 contributes to the ATP binding site; the sequence is APSGAGKS.

The protein belongs to the ABC transporter superfamily. Lipoprotein translocase (TC 3.A.1.125) family. As to quaternary structure, the complex is composed of two ATP-binding proteins (LolD) and two transmembrane proteins (LolC and LolE).

The protein localises to the cell inner membrane. Its function is as follows. Part of the ABC transporter complex LolCDE involved in the translocation of mature outer membrane-directed lipoproteins, from the inner membrane to the periplasmic chaperone, LolA. Responsible for the formation of the LolA-lipoprotein complex in an ATP-dependent manner. The protein is Lipoprotein-releasing system ATP-binding protein LolD of Jannaschia sp. (strain CCS1).